Here is a 387-residue protein sequence, read N- to C-terminus: Phosphoglycerate kinase (387 aa).

Substrate contacts are provided by residues 21–23 (DLN), arginine 36, 59–62 (HLGR), arginine 113, and arginine 146. Residues lysine 197, glutamate 314, and 340 to 343 (GGDT) each bind ATP.

The protein belongs to the phosphoglycerate kinase family. Monomer.

The protein localises to the cytoplasm. The catalysed reaction is (2R)-3-phosphoglycerate + ATP = (2R)-3-phospho-glyceroyl phosphate + ADP. The protein operates within carbohydrate degradation; glycolysis; pyruvate from D-glyceraldehyde 3-phosphate: step 2/5. The polypeptide is Phosphoglycerate kinase (Pseudomonas putida (strain GB-1)).